A 139-amino-acid chain; its full sequence is Cystatin cpi-1 (139 aa).

Positions 1–19 (MRFILLIALVFAVLDGINC) are cleaved as a signal peptide. Asparagine 29 carries an N-linked (GlcNAc...) asparagine glycan. The Secondary area of contact motif lies at 65-69 (QVVAG). The cysteines at positions 83 and 99 are disulfide-linked.

This sequence belongs to the cystatin family.

Its function is as follows. Cysteine protease inhibitor which inhibits members of the peptidase C1 family. Does not inhibit asparaginyl endopeptidase. May play a protective role against exogenous cysteine proteases derived from soil bacteria or fungi, or rotting fruits and vegetation. The protein is Cystatin cpi-1 of Caenorhabditis elegans.